The following is a 302-amino-acid chain: uncharacterized protein (302 aa).

The first 28 residues, 1–28 (MNKLTAQNLLKKSRFLKYSLLTSISVGA), serve as a signal peptide directing secretion.

This is an uncharacterized protein from Rickettsia prowazekii (strain Madrid E).